The following is a 449-amino-acid chain: Cysteine--tRNA ligase (449 aa).

C29 serves as a coordination point for Zn(2+). The short motif at 31–41 (PTVYDHLHIGN) is the 'HIGH' region element. Residues C211, H236, and E240 each coordinate Zn(2+). The 'KMSKS' region motif lies at 269–273 (KMSKS). K272 contacts ATP.

Belongs to the class-I aminoacyl-tRNA synthetase family. In terms of assembly, monomer. It depends on Zn(2+) as a cofactor.

It localises to the cytoplasm. It carries out the reaction tRNA(Cys) + L-cysteine + ATP = L-cysteinyl-tRNA(Cys) + AMP + diphosphate. This chain is Cysteine--tRNA ligase, found in Methylocella silvestris (strain DSM 15510 / CIP 108128 / LMG 27833 / NCIMB 13906 / BL2).